A 211-amino-acid polypeptide reads, in one-letter code: Protein G12 (211 aa).

Residues 1–19 (MKIAAFVVACLVATSAVSC) form the signal peptide.

The polypeptide is Protein G12 (Anopheles gambiae (African malaria mosquito)).